Consider the following 613-residue polypeptide: Ribosome-associated molecular chaperone SSB1 (613 aa).

Residues 1-391 (MADGVFQGAI…ILTGQSTSDE (391 aa)) form a nucleotide binding domain (NBD) region. Residues 16–18 (TTY), Lys73, 205–207 (GGT), 271–278 (ERAKRTLS), and Gly342 contribute to the ATP site. Positions 392 to 402 (TKDLLLLDVAP) are inter-domain linker. The segment at 403–613 (LSLGVGMQGD…RVVTKAMSSR (211 aa)) is substrate binding domain (SBD). The tract at residues 516–612 (SEDIEKMVNQ…KRVVTKAMSS (97 aa)) is lid domain (SBDalpha). The Nuclear export signal motif lies at 574–582 (IEAALADAL).

The protein belongs to the heat shock protein 70 family. Ssb-type Hsp70 subfamily. In terms of assembly, binds to ribosomes. Binds close to the ribosomal tunnel exit via contacts with both ribosomal proteins and rRNA. Directly interacts with nascent polypeptides. This interaction is dependent on the ribosome-associated complex (RAC). Interacts with SSE1. Interacts with FES1.

Its subcellular location is the cytoplasm. It catalyses the reaction ATP + H2O = ADP + phosphate + H(+). In terms of biological role, ribosome-bound, Hsp70-type chaperone that assists in the cotranslational folding of newly synthesized proteins in the cytosol. Stimulates folding by interacting with nascent chains, binding to short, largely hydrophobic sequences exposed by unfolded proteins, thereby stabilizing longer, more slowly translated, and aggregation-prone nascent polypeptides and domains that cannot fold stably until fully synthesized. The Hsp70-protein substrate interaction depends on ATP-binding and on allosteric regulation between the NBD and the SBD. The ATP-bound state is characterized by a fast exchange rate of substrate (low affinity state), while in the ADP-bound state exchange is much slower (high affinity state). During the Hsp70 cycle, the chaperone switches between the ATP-bound state (open conformation) and the ADP-bound state (closed conformation) by major conformational rearrangements involving mainly the lid domain. Ssb cooperates with a specific Hsp40/Hsp70 co-chaperone termed the ribosome-associated complex (RAC), which stimulates the ATPase activity of the ribosome-associated pool of Ssbs and switches it to the high affinity substrate binding state. Hsp110 chaperone SSE1 and FES1 act as nucleotide exchange factors that cause substrate release. This is Ribosome-associated molecular chaperone SSB1 (SSB1) from Nakaseomyces delphensis (Yeast).